A 105-amino-acid chain; its full sequence is Prokineticin-1 (105 aa).

Positions 1–19 are cleaved as a signal peptide; it reads MRGAVQVFIMLLLATVSDC. Intrachain disulfides connect cysteine 26–cysteine 38, cysteine 32–cysteine 50, cysteine 37–cysteine 78, cysteine 60–cysteine 86, and cysteine 80–cysteine 96.

The protein belongs to the AVIT (prokineticin) family.

The protein localises to the secreted. Its function is as follows. Potently contracts gastrointestinal (GI) smooth muscle. Induces proliferation, migration and fenestration (the formation of membrane discontinuities) in capillary endothelial cells derived from endocrine glands. Has little or no effect on a variety of other endothelial and non-endothelial cell types. Induces proliferation and differentiation, but not migration, of enteric neural crest cells. Directly influences neuroblastoma progression by promoting the proliferation and migration of neuroblastoma cells. Positively regulates PTGS2 expression and prostaglandin synthesis. May play a role in placentation. May play a role in normal and pathological testis angiogenesis. The sequence is that of Prokineticin-1 (Prok1) from Rattus norvegicus (Rat).